A 417-amino-acid chain; its full sequence is Imidazolonepropionase (417 aa).

The Fe(3+) site is built by histidine 80 and histidine 82. Residues histidine 80 and histidine 82 each coordinate Zn(2+). 4-imidazolone-5-propanoate is bound by residues arginine 89, tyrosine 152, and histidine 187. An N-formimidoyl-L-glutamate-binding site is contributed by tyrosine 152. Histidine 252 lines the Fe(3+) pocket. Histidine 252 lines the Zn(2+) pocket. Residue glutamate 255 coordinates 4-imidazolone-5-propanoate. Residue aspartate 326 participates in Fe(3+) binding. Residue aspartate 326 participates in Zn(2+) binding. N-formimidoyl-L-glutamate is bound by residues asparagine 328 and glycine 330. Serine 331 provides a ligand contact to 4-imidazolone-5-propanoate.

Belongs to the metallo-dependent hydrolases superfamily. HutI family. It depends on Zn(2+) as a cofactor. Fe(3+) serves as cofactor.

The protein resides in the cytoplasm. It carries out the reaction 4-imidazolone-5-propanoate + H2O = N-formimidoyl-L-glutamate. The protein operates within amino-acid degradation; L-histidine degradation into L-glutamate; N-formimidoyl-L-glutamate from L-histidine: step 3/3. Its function is as follows. Catalyzes the hydrolytic cleavage of the carbon-nitrogen bond in imidazolone-5-propanoate to yield N-formimidoyl-L-glutamate. It is the third step in the universal histidine degradation pathway. In Bacteroides fragilis (strain ATCC 25285 / DSM 2151 / CCUG 4856 / JCM 11019 / LMG 10263 / NCTC 9343 / Onslow / VPI 2553 / EN-2), this protein is Imidazolonepropionase.